Here is a 323-residue protein sequence, read N- to C-terminus: Pantothenate kinase (323 aa).

101–108 serves as a coordination point for ATP; sequence GSVAVGKS.

This sequence belongs to the prokaryotic pantothenate kinase family.

It is found in the cytoplasm. It catalyses the reaction (R)-pantothenate + ATP = (R)-4'-phosphopantothenate + ADP + H(+). Its pathway is cofactor biosynthesis; coenzyme A biosynthesis; CoA from (R)-pantothenate: step 1/5. This is Pantothenate kinase from Xanthobacter autotrophicus (strain ATCC BAA-1158 / Py2).